The sequence spans 283 residues: S-methyl-5'-thioadenosine phosphorylase (283 aa).

Thr18 lines the phosphate pocket. Lys51 carries the post-translational modification N6-acetyllysine. Phosphate is bound by residues 60–61 and 93–94; these read RH and TA. Residue Met196 participates in substrate binding. Thr197 is a binding site for phosphate. 220–222 is a binding site for substrate; it reads DYD.

It belongs to the PNP/MTAP phosphorylase family. MTAP subfamily. Homotrimer. As to expression, ubiquitously expressed.

Its subcellular location is the cytoplasm. It localises to the nucleus. It carries out the reaction S-methyl-5'-thioadenosine + phosphate = 5-(methylsulfanyl)-alpha-D-ribose 1-phosphate + adenine. The protein operates within amino-acid biosynthesis; L-methionine biosynthesis via salvage pathway; S-methyl-5-thio-alpha-D-ribose 1-phosphate from S-methyl-5'-thioadenosine (phosphorylase route): step 1/1. Its activity is regulated as follows. Inhibited by 5'-methylthiotubercin and 5'-chloroformycin. Its function is as follows. Catalyzes the reversible phosphorylation of S-methyl-5'-thioadenosine (MTA) to adenine and 5-methylthioribose-1-phosphate. Involved in the breakdown of MTA, a major by-product of polyamine biosynthesis. Responsible for the first step in the methionine salvage pathway after MTA has been generated from S-adenosylmethionine. Has broad substrate specificity with 6-aminopurine nucleosides as preferred substrates. The protein is S-methyl-5'-thioadenosine phosphorylase of Homo sapiens (Human).